Consider the following 190-residue polypeptide: ATP synthase subunit delta (190 aa).

It belongs to the ATPase delta chain family. F-type ATPases have 2 components, F(1) - the catalytic core - and F(0) - the membrane proton channel. F(1) has five subunits: alpha(3), beta(3), gamma(1), delta(1), epsilon(1). F(0) has three main subunits: a(1), b(2) and c(10-14). The alpha and beta chains form an alternating ring which encloses part of the gamma chain. F(1) is attached to F(0) by a central stalk formed by the gamma and epsilon chains, while a peripheral stalk is formed by the delta and b chains.

Its subcellular location is the cell inner membrane. F(1)F(0) ATP synthase produces ATP from ADP in the presence of a proton or sodium gradient. F-type ATPases consist of two structural domains, F(1) containing the extramembraneous catalytic core and F(0) containing the membrane proton channel, linked together by a central stalk and a peripheral stalk. During catalysis, ATP synthesis in the catalytic domain of F(1) is coupled via a rotary mechanism of the central stalk subunits to proton translocation. Its function is as follows. This protein is part of the stalk that links CF(0) to CF(1). It either transmits conformational changes from CF(0) to CF(1) or is implicated in proton conduction. This chain is ATP synthase subunit delta, found in Beijerinckia indica subsp. indica (strain ATCC 9039 / DSM 1715 / NCIMB 8712).